A 287-amino-acid polypeptide reads, in one-letter code: Protoheme IX farnesyltransferase (287 aa).

7 consecutive transmembrane segments (helical) span residues 19–39, 100–120, 134–154, 162–182, 212–232, 233–253, and 267–287; these read LMVAGATFFGAMLAVPHVTIT, MVLCLAGGLTSLLVGIGIVAV, FALLVGAAAGAMPPVVGWLAV, MLVVVYTLYLLWQIPHFWLHA, VWFHAYAVAVLMVPAFPLLEG, VGMRIMVTLCGIALLFAAMLA, and VLCAVMVVLLIDRLAIPVSLF.

The protein belongs to the UbiA prenyltransferase family. Protoheme IX farnesyltransferase subfamily.

The protein resides in the cell inner membrane. The enzyme catalyses heme b + (2E,6E)-farnesyl diphosphate + H2O = Fe(II)-heme o + diphosphate. The protein operates within porphyrin-containing compound metabolism; heme O biosynthesis; heme O from protoheme: step 1/1. In terms of biological role, converts heme B (protoheme IX) to heme O by substitution of the vinyl group on carbon 2 of heme B porphyrin ring with a hydroxyethyl farnesyl side group. This chain is Protoheme IX farnesyltransferase, found in Nitratidesulfovibrio vulgaris (strain DP4) (Desulfovibrio vulgaris).